The primary structure comprises 288 residues: MWCPSVSLSIWANAWLAGKAAPDDVLDALSLWAPTQSVAAYDAVAAGHTGLPWPDVHDAGTVSLLQTLRAAVGRRRLRGTINVVLPVPGDVRGLAAGTQFEHDALAAGEAVIVANPEDPGSAVGLVPEFSYGDVDEAAQSEPLTPELCALSWMVYSLPGAPVLEHYELGDAEYALRSAVRSAAEALSTIGLGSSDVAKPRGLVEQLLESSRQHRVPDHAPSRALRVLENAAHVDAIIAVSAGLSRLPIGTQSLSDAQRATDALRPLTAVVRSARMSAVTAILHSAWPD.

The protein to M.bovis Mb1522c, M.leprae ML1804 and M.avium MAV321.

This is an uncharacterized protein from Mycobacterium tuberculosis (strain ATCC 25618 / H37Rv).